Consider the following 769-residue polypeptide: Probable protease Ga0334635_1659 (769 aa).

The tract at residues 118 to 167 (VARGSSDNNGAPPLSFTLSHGDPKSDPEPSSPSRLVNTGLSEAERPESPL) is disordered.

In terms of biological role, probably a dedicated protease for substrate gasdermin bGSDM; cleaves the bGSDM precursor, releasing the pore-forming moiety, which integrates into the membrane and triggers cell death. Involved in defense against bacteriophages. Expression of gasdermin bGSDM and this neighboring protease is toxic in E.coli. The chain is Probable protease Ga0334635_1659 from Vitiosangium sp. (strain GDMCC 1.1324).